We begin with the raw amino-acid sequence, 443 residues long: Probable glycine dehydrogenase (decarboxylating) subunit 1 (443 aa).

This sequence belongs to the GcvP family. N-terminal subunit subfamily. In terms of assembly, the glycine cleavage system is composed of four proteins: P, T, L and H. In this organism, the P 'protein' is a heterodimer of two subunits.

It catalyses the reaction N(6)-[(R)-lipoyl]-L-lysyl-[glycine-cleavage complex H protein] + glycine + H(+) = N(6)-[(R)-S(8)-aminomethyldihydrolipoyl]-L-lysyl-[glycine-cleavage complex H protein] + CO2. In terms of biological role, the glycine cleavage system catalyzes the degradation of glycine. The P protein binds the alpha-amino group of glycine through its pyridoxal phosphate cofactor; CO(2) is released and the remaining methylamine moiety is then transferred to the lipoamide cofactor of the H protein. The protein is Probable glycine dehydrogenase (decarboxylating) subunit 1 of Solidesulfovibrio magneticus (strain ATCC 700980 / DSM 13731 / RS-1) (Desulfovibrio magneticus).